Here is a 271-residue protein sequence, read N- to C-terminus: Phosphate import ATP-binding protein PstB (271 aa).

The ABC transporter domain occupies 24 to 266; it reads MIGKDVSVYY…PDDQRTQDYI (243 aa). Residue 56 to 63 participates in ATP binding; it reads GPSGCGKS.

This sequence belongs to the ABC transporter superfamily. Phosphate importer (TC 3.A.1.7) family. In terms of assembly, the complex is composed of two ATP-binding proteins (PstB), two transmembrane proteins (PstC and PstA) and a solute-binding protein (PstS).

It is found in the cell inner membrane. The enzyme catalyses phosphate(out) + ATP + H2O = ADP + 2 phosphate(in) + H(+). Part of the ABC transporter complex PstSACB involved in phosphate import. Responsible for energy coupling to the transport system. This chain is Phosphate import ATP-binding protein PstB, found in Agrobacterium fabrum (strain C58 / ATCC 33970) (Agrobacterium tumefaciens (strain C58)).